Consider the following 426-residue polypeptide: Histidine--tRNA ligase 1 (426 aa).

This sequence belongs to the class-II aminoacyl-tRNA synthetase family. As to quaternary structure, homodimer.

The protein resides in the cytoplasm. The catalysed reaction is tRNA(His) + L-histidine + ATP = L-histidyl-tRNA(His) + AMP + diphosphate + H(+). In Shouchella clausii (strain KSM-K16) (Alkalihalobacillus clausii), this protein is Histidine--tRNA ligase 1.